Here is a 440-residue protein sequence, read N- to C-terminus: MEYQILKMSSCLFILLFLTPGILCICPLQCTCTERHRHVDCSGRNLTTLPPGLQENIIHLNLSYNHFTDLHNQLTPYTNLRTLDISNNRLESLPAQLPRSLWNMSAANNNIKLLDKSDTAYQWNLKYLDVSKNMLEKVVLIKNTLRSLEVLNLSSNKLWTVPTNMPSKLHIVDLSNNSLTQILPGTLINLTNLTHLYLHNNKFTFIPEQSFDQLLQLQEITLHNNRWSCDHKQNITYLLKWVMETKAHVIGTPCSKQVSSLKEQSMYPTPPGFTSSLFTMSEMQTVDTINSLSMVTQPKVTKTPKQYRGKETTFGVTLSKDTTFSSTDRAVVAYPEDTPTEMTNSHEAAAATLTIHLQDGMSSNASLTSATKSPPSPVTLSIARGMPNNFSEMPRQSTTLNLRREETTANGNTRPPSAASAWKVNASLLLMLNAVVMLAG.

Positions 1-24 (MEYQILKMSSCLFILLFLTPGILC) are cleaved as a signal peptide. An LRRNT domain is found at 25 to 55 (ICPLQCTCTERHRHVDCSGRNLTTLPPGLQE). 2 N-linked (GlcNAc...) asparagine glycosylation sites follow: Asn-45 and Asn-61. LRR repeat units follow at residues 56–78 (NIIH…TPYT), 79–100 (NLRT…LPRS), 101–121 (LWNM…DTAY), 124–145 (NLKY…KNTL), 147–168 (SLEV…MPSK), 169–189 (LHIV…TLIN), 192–213 (NLTH…SFDQ), and 216–239 (QLQE…TYLL). N-linked (GlcNAc...) asparagine glycosylation is present at Asn-103. N-linked (GlcNAc...) asparagine glycosylation is found at Asn-152, Asn-176, Asn-189, Asn-192, and Asn-234. Ser/Thr-rich repeat units follow at residues 229–270 (CDHK…YPTP), 271–292 (PGFT…INSL), 293–335 (SMVT…VAYP), 336–377 (EDTP…PPSP), and 378–416 (VTLS…TRPP). Asn-364 and Asn-389 each carry an N-linked (GlcNAc...) asparagine glycan. A lipid anchor (GPI-anchor amidated serine) is attached at Ser-417. Positions 418–440 (AASAWKVNASLLLMLNAVVMLAG) are cleaved as a propeptide — removed in mature form. A glycan (N-linked (GlcNAc...) asparagine) is linked at Asn-425.

Binds to RTN4R. In terms of processing, O-glycosylated in its Ser/Thr-rich repeat domain. In terms of tissue distribution, oligodendrocytes and myelin of the central nervous system.

It is found in the cell membrane. Cell adhesion molecule contributing to the interactive process required for myelination in the central nervous system. The protein is Oligodendrocyte-myelin glycoprotein (Omg) of Mus musculus (Mouse).